The sequence spans 241 residues: Putative integrase ORF241 (241 aa).

The Tyr recombinase domain occupies 82–241 (VEAKKTLVSA…AIEMLRKLAD (160 aa)). Catalysis depends on residues Arg119, Lys144, His191, Arg194, and His217. Tyr226 (O-(3'-phospho-DNA)-tyrosine intermediate) is an active-site residue.

It belongs to the 'phage' integrase family.

In terms of biological role, this protein may encode an integrase, which is necessary for integration of the viral DNA into host genome. The protein is Putative integrase ORF241 of Acidianus convivator (ATV).